We begin with the raw amino-acid sequence, 232 residues long: Orotidine 5'-phosphate decarboxylase (232 aa).

Substrate is bound by residues Asp13, Lys35, Asp62–Thr71, Thr121, Arg182, Gln191, Gly211, and Arg212. The active-site Proton donor is Lys64.

This sequence belongs to the OMP decarboxylase family. Type 1 subfamily. In terms of assembly, homodimer.

The catalysed reaction is orotidine 5'-phosphate + H(+) = UMP + CO2. The protein operates within pyrimidine metabolism; UMP biosynthesis via de novo pathway; UMP from orotate: step 2/2. Functionally, catalyzes the decarboxylation of orotidine 5'-monophosphate (OMP) to uridine 5'-monophosphate (UMP). This is Orotidine 5'-phosphate decarboxylase from Acinetobacter baumannii (strain AB0057).